Here is a 621-residue protein sequence, read N- to C-terminus: Very-long-chain aldehyde decarbonylase GL1-5 (621 aa).

5 helical membrane passes run 99-119 (IILS…GQHL), 126-146 (GAGL…YWFH), 186-206 (LLFS…IIAF), 224-244 (FELV…LMYT), and 332-352 (MWPL…SFTV). Positions 138-272 (VEFLYYWFHR…MPFYDYIYNT (135 aa)) constitute a Fatty acid hydroxylase domain.

The protein belongs to the sterol desaturase family. Homodimer.

The protein resides in the endoplasmic reticulum membrane. It catalyses the reaction a long-chain fatty aldehyde + 2 NADPH + O2 + H(+) = a long-chain alkane + formate + 2 NADP(+) + H2O. Its function is as follows. Aldehyde decarbonylase involved in the conversion of aldehydes to alkanes. Core component of a very-long-chain alkane synthesis complex. This is Very-long-chain aldehyde decarbonylase GL1-5 from Oryza sativa subsp. indica (Rice).